Consider the following 546-residue polypeptide: Immunoglobulin-like domain-containing receptor 1 (546 aa).

The first 23 residues, Met-1–Ser-23, serve as a signal peptide directing secretion. In terms of domain architecture, Ig-like V-type spans Leu-24 to Lys-162. Residues Leu-24–His-167 are Extracellular-facing. A disulfide bond links Cys-45 and Cys-145. Residues Trp-168–Cys-188 traverse the membrane as a helical segment. Residues Trp-189–Ile-546 are Cytoplasmic-facing. Residues Trp-399–Ile-546 form a disordered region. A compositionally biased stretch (basic and acidic residues) spans Arg-442–Gln-457. Residues Arg-458 to Ser-467 are compositionally biased toward basic residues. 2 positions are modified to phosphoserine: Ser-499 and Ser-501. Over residues Gly-527–His-539 the composition is skewed to basic and acidic residues.

This sequence belongs to the immunoglobulin superfamily. LISCH7 family. Homooligomer. Interacts with MARVELD2 and OCLN; the interaction is required to recruit MARVELD2 to tricellular contacts. Interacts (via C-terminus) with TRA2A, TRA2B and SRSF1. Interacts with PLSCR1. Mainly expressed in prostate and to a lower extent in testis, pancreas, kidney, heart and liver.

The protein resides in the cell membrane. Its subcellular location is the cell junction. It is found in the tight junction. It localises to the cytoplasm. The protein localises to the cytosol. Its function is as follows. Maintains epithelial barrier function by recruiting MARVELD2/tricellulin to tricellular tight junctions (tTJs). Crucial for normal hearing by maintaining the structural and functional integrity of tTJs, which are critical for the survival of auditory neurosensory HCs. Mediates fatty acids and lipoproteins-stimulated CCK/cholecystokinin secretion in the small intestine. In the inner ear, may regulate alternative pre-mRNA splicing via binding to TRA2A, TRA2B and SRSF1. Functionally, (Microbial infection) Promotes influenza virus infection by inhibiting viral nucleoprotein NP binding to PLSCR1 and thereby PLSCR1-mediated antiviral activity. This chain is Immunoglobulin-like domain-containing receptor 1, found in Homo sapiens (Human).